We begin with the raw amino-acid sequence, 96 residues long: Large ribosomal subunit protein uL23 (96 aa).

It belongs to the universal ribosomal protein uL23 family. Part of the 50S ribosomal subunit. Contacts protein L29, and trigger factor when it is bound to the ribosome.

Its function is as follows. One of the early assembly proteins it binds 23S rRNA. One of the proteins that surrounds the polypeptide exit tunnel on the outside of the ribosome. Forms the main docking site for trigger factor binding to the ribosome. This is Large ribosomal subunit protein uL23 from Bacillus cytotoxicus (strain DSM 22905 / CIP 110041 / 391-98 / NVH 391-98).